The sequence spans 1691 residues: Protein TIC 214 (1691 aa).

6 helical membrane-spanning segments follow: residues 19–39 (MLLGFYYGLLTTLPVGPSQIL), 60–80 (VLAQLITASSIYCSPIYLLLL), 84–104 (LLTIVAIPYTLLFCLVIKDFP), 123–143 (LFLISFFFQILNPIMLPNSVL), 158–178 (TVFMVSTFMGWLTGQAAFNFF), and 200–220 (FIYATFSIVSISYAVAYLGRA). The interval 819–839 (EKQHTLQRKHKEIGSKSRELK) is disordered.

This sequence belongs to the TIC214 family. As to quaternary structure, part of the Tic complex.

Its subcellular location is the plastid. It localises to the chloroplast inner membrane. Functionally, involved in protein precursor import into chloroplasts. May be part of an intermediate translocation complex acting as a protein-conducting channel at the inner envelope. The protein is Protein TIC 214 of Adiantum capillus-veneris (Maidenhair fern).